Consider the following 229-residue polypeptide: MGQKVHPNGIRLGIVKPWNTTWFANSQEFADNLDGDFKVRQFLIKELKKASLSRVVIERPAKSIRVTIHTARPGIVIGKKGEDVEKLRAHISKIAGVPAQINISEVRKPELDAQLVGDSIASQLERRVMFRRAMKRAVQNAMRLGAKGIKVQVGGRLGGAEIARSEWYREGRVPLHTLRADIDYATSSAHTQYGVIGVKVWIFKGEVLGGMPIEEPKADKPKKQRKSRK.

Residues valine 39–arginine 107 enclose the KH type-2 domain.

Belongs to the universal ribosomal protein uS3 family. Part of the 30S ribosomal subunit. Forms a tight complex with proteins S10 and S14.

Binds the lower part of the 30S subunit head. Binds mRNA in the 70S ribosome, positioning it for translation. In Photobacterium profundum (strain SS9), this protein is Small ribosomal subunit protein uS3.